The primary structure comprises 369 residues: Delta(6)-protoilludene synthase STEHIDRAFT_73029 (369 aa).

The Mg(2+) site is built by Asp107, Asn243, Ser247, and Glu251. The short motif at Asp107–Asp111 is the D(D/E)XX(D/E) motif element. Residues Asn243–Glu251 carry the NSE motif motif. 2 residues coordinate (2E,6E)-farnesyl diphosphate: Arg333 and Tyr334.

Belongs to the terpene synthase family. Mg(2+) is required as a cofactor. Requires Mn(2+) as cofactor. Ca(2+) serves as cofactor. It depends on Ni(2+) as a cofactor. The cofactor is Co(2+).

The catalysed reaction is (2E,6E)-farnesyl diphosphate = Delta(6)-protoilludene + diphosphate. It catalyses the reaction (2E,6E)-farnesyl diphosphate = alpha-selinene + diphosphate. Its activity is regulated as follows. Ca(2+) switches the cyclization mechanism of delta(6)-protoilludene synthase from 1,11 to 1,10 cyclization which leads to the production of beta-elemene. Its function is as follows. Terpene cyclase that catalyzes the cyclization of farnesyl diphosphate (FPP) to delta(6)-protoilludene. In presence of Ca(2+), a significant switch from 1,11 to a dual 1,11/1,10 cyclization occurs, producing beta-elemene as the major product, with lower levels of delta(6)-protoilludene and (E)-beta-caryophyllene, and traces of beta-selinene and alpha-selinene. The sequence is that of Delta(6)-protoilludene synthase STEHIDRAFT_73029 from Stereum hirsutum (strain FP-91666) (White-rot fungus).